The primary structure comprises 575 residues: Sodium/hydrogen exchanger 8 (575 aa).

A run of 11 helical transmembrane segments spans residues 54-74 (MTIF…HLLI), 78-98 (LHFL…GAVI), 117-137 (PNMF…YSLH), 150-170 (LFAV…IYFL), 185-205 (FAFG…IFNA), 255-275 (LGYF…TGLI), 305-325 (GLAE…GIVM), 348-368 (VAFL…FSFP), 373-393 (ISFV…NIFP), 411-431 (MFIM…SLHL), and 445-465 (TTII…MPLI). Position 504 is a phosphothreonine (threonine 504). Residues serine 565 and serine 567 each carry the phosphoserine modification.

It belongs to the monovalent cation:proton antiporter 1 (CPA1) transporter (TC 2.A.36) family. As to expression, intestine and kidneys.

It localises to the golgi apparatus membrane. It is found in the golgi apparatus. The protein resides in the trans-Golgi network membrane. The protein localises to the endosome. Its subcellular location is the multivesicular body membrane. It localises to the apical cell membrane. It is found in the cytoplasmic vesicle. The protein resides in the secretory vesicle. The protein localises to the acrosome. The catalysed reaction is Na(+)(in) + H(+)(out) = Na(+)(out) + H(+)(in). With respect to regulation, expression and activity are regulated by acid media by increasing the rate of trafficking to the apical membrane. Inhibited by HOE694 and S3226. In terms of biological role, na(+)/H(+) antiporter. Mediates the electoneutral exchange of intracellular H(+) ions for extracellular Na(+) in 1:1 stoichiometry. Acts as an Na(+)/H(+) exchanger in the trans-Golgi. Contributes to the regulation of pH regulation of Golgi apparatus, and consequently, in protein trafficking and endosomal morphology. In germ cells, plays a crucial role in acrosome biogenesis and sperm development, probably by playing a role in the fusion of the Golgi-derived vesicles that form the acrosomal cap. Can also be active at the cell surface of specialized cells. In the small intestine, at the cell membrane, plays a major physiological role in transepithelial absorption of Na(+) and regulates intracellular pH homeostasis of intestinal epithelial cells. Acts as an important regulator of mucosal integrity in the intestine and in the stomach, could mediate the pH fluctuation necessary for mucin exocytosis or assist membrane trafficking of other proteins. Plays a role in photoreceptor survival and in the maintenance of intracellular pH homeostasis in retinal pigment epithelium (RPE cells). In Rattus norvegicus (Rat), this protein is Sodium/hydrogen exchanger 8 (Slc9a8).